Here is a 179-residue protein sequence, read N- to C-terminus: ATP-dependent protease subunit HslV (179 aa).

T7 is an active-site residue. Positions 162, 165, and 168 each coordinate Na(+).

This sequence belongs to the peptidase T1B family. HslV subfamily. A double ring-shaped homohexamer of HslV is capped on each side by a ring-shaped HslU homohexamer. The assembly of the HslU/HslV complex is dependent on binding of ATP.

It is found in the cytoplasm. It carries out the reaction ATP-dependent cleavage of peptide bonds with broad specificity.. With respect to regulation, allosterically activated by HslU binding. Functionally, protease subunit of a proteasome-like degradation complex believed to be a general protein degrading machinery. This chain is ATP-dependent protease subunit HslV, found in Nitrosococcus oceani (strain ATCC 19707 / BCRC 17464 / JCM 30415 / NCIMB 11848 / C-107).